The chain runs to 404 residues: Sorting nexin-5 (404 aa).

Residue Ala2 is modified to N-acetylalanine. Positions 25–172 (LNVDPSLQID…HVFLEYDQDL (148 aa)) constitute a PX domain. A 1,2-diacyl-sn-glycero-3-phospho-(1D-myo-inositol-4,5-bisphosphate) is bound by residues 40 to 46 (SERDKVK), 99 to 105 (FDGPREK), and 113 to 116 (EGSM). The segment at 169 to 261 (DQDLSVRRKN…HSLALEEPTV (93 aa)) is interaction with DOCK1. Positions 183-200 (FGGFFKSVVKSADEVLFS) are membrane-binding amphipathic helix. Ser193 is subject to Phosphoserine. Positions 202–404 (VKEVDDFFEQ…QSCIDLFKNN (203 aa)) constitute a BAR domain. An N6-acetyllysine modification is found at Lys275.

It belongs to the sorting nexin family. Forms heterodimers with BAR domain-containing sorting nexins SNX1 and SNX2; does not homodimerize. The heterodimers are proposed to self-assemble into helical arrays on the membrane to stabilize and expand local membrane curvature underlying endosomal tubule formation. Thought to be a component of the originally described retromer complex (also called SNX-BAR retromer) which is a pentamer containing the heterotrimeric retromer cargo-selective complex (CSC), also described as vacuolar protein sorting subcomplex (VPS), and a heterodimeric membrane-deforming subcomplex formed between SNX1 or SNX2 and SNX5 or SNX6 (also called SNX-BAR subcomplex); the respective CSC and SNX-BAR subcomplexes associate with low affinity. Interacts with SNX1, SNX2, VPS26A, VPS29, VPS35, DCTN1, DOCK1, MIB1, PIP5K1C. Interacts with HGS; increased by PIP5K1C kinase activity and by PtdIns(3P) and/or PtdIns(3,4)P2. Detected in macrophages (at protein level).

It is found in the endosome. It localises to the early endosome. The protein localises to the early endosome membrane. Its subcellular location is the cell membrane. The protein resides in the cytoplasmic vesicle membrane. It is found in the cytoplasm. It localises to the cell projection. The protein localises to the phagocytic cup. Its subcellular location is the ruffle. In terms of biological role, involved in several stages of intracellular trafficking. Interacts with membranes containing phosphatidylinositol lipids. Acts in part as component of the retromer membrane-deforming SNX-BAR subcomplex. The SNX-BAR retromer mediates retrograde transport of cargo proteins from endosomes to the trans-Golgi network (TGN) and is involved in endosome-to-plasma membrane transport for cargo protein recycling. The SNX-BAR subcomplex functions to deform the donor membrane into a tubular profile called endosome-to-TGN transport carrier (ETC). Does not have in vitro vesicle-to-membrane remodeling activity. Involved in retrograde transport of lysosomal enzyme receptor IGF2R. May function as link between endosomal transport vesicles and dynactin. Plays a role in the internalization of EGFR after EGF stimulation. Involved in EGFR endosomal sorting and degradation; the function involves PIP5K1C and is retromer-independent. Together with PIP5K1C facilitates HGS interaction with ubiquitinated EGFR, which initiates EGFR sorting to intraluminal vesicles (ILVs) of the multivesicular body for subsequent lysosomal degradation. Involved in E-cadherin sorting and degradation; inhibits PIP5K1C-mediated E-cadherin degradation. Plays a role in macropinocytosis. The protein is Sorting nexin-5 (Snx5) of Mus musculus (Mouse).